Consider the following 275-residue polypeptide: Nitrogenase iron protein (275 aa).

ATP is bound at residue 9–16; the sequence is GKGGIGKS. Residue C97 coordinates [4Fe-4S] cluster. At R100 the chain carries ADP-ribosylarginine; by dinitrogenase reductase ADP-ribosyltransferase. Position 132 (C132) interacts with [4Fe-4S] cluster.

It belongs to the NifH/BchL/ChlL family. In terms of assembly, homodimer. Requires [4Fe-4S] cluster as cofactor. The reversible ADP-ribosylation of Arg-100 inactivates the nitrogenase reductase and regulates nitrogenase activity.

The catalysed reaction is N2 + 8 reduced [2Fe-2S]-[ferredoxin] + 16 ATP + 16 H2O = H2 + 8 oxidized [2Fe-2S]-[ferredoxin] + 2 NH4(+) + 16 ADP + 16 phosphate + 6 H(+). In terms of biological role, the key enzymatic reactions in nitrogen fixation are catalyzed by the nitrogenase complex, which has 2 components: the iron protein and the molybdenum-iron protein. The protein is Nitrogenase iron protein (nifH) of Methanococcus maripaludis (Methanococcus deltae).